A 527-amino-acid chain; its full sequence is Probable bifunctional tRNA threonylcarbamoyladenosine biosynthesis protein (527 aa).

Residues 1-323 (MPDIMPDDGL…YRADEVEVAW (323 aa)) form a kae1 region. Positions 110, 114, and 131 each coordinate Fe cation. L-threonylcarbamoyladenylate contacts are provided by residues 131–135 (YASGA), D163, G176, E180, and N256. D284 contributes to the Fe cation binding site. A Protein kinase domain is found at 333–527 (IGPHEGGVAR…HEVELRGRYL (195 aa)). Residues 340-348 (VARGAEAVV) and K357 each bind ATP. The active-site Proton acceptor; for kinase activity is D444.

The protein in the N-terminal section; belongs to the KAE1 / TsaD family. In the C-terminal section; belongs to the protein kinase superfamily. Tyr protein kinase family. BUD32 subfamily. Component of the KEOPS complex that consists of Kae1, Bud32, Cgi121 and Pcc1; the whole complex dimerizes. It depends on Fe(2+) as a cofactor.

The protein resides in the cytoplasm. It carries out the reaction L-seryl-[protein] + ATP = O-phospho-L-seryl-[protein] + ADP + H(+). The catalysed reaction is L-threonyl-[protein] + ATP = O-phospho-L-threonyl-[protein] + ADP + H(+). It catalyses the reaction L-threonylcarbamoyladenylate + adenosine(37) in tRNA = N(6)-L-threonylcarbamoyladenosine(37) in tRNA + AMP + H(+). Functionally, required for the formation of a threonylcarbamoyl group on adenosine at position 37 (t(6)A37) in tRNAs that read codons beginning with adenine. Is a component of the KEOPS complex that is probably involved in the transfer of the threonylcarbamoyl moiety of threonylcarbamoyl-AMP (TC-AMP) to the N6 group of A37. The Kae1 domain likely plays a direct catalytic role in this reaction. The Bud32 domain probably displays kinase activity that regulates Kae1 function. In Methanoculleus marisnigri (strain ATCC 35101 / DSM 1498 / JR1), this protein is Probable bifunctional tRNA threonylcarbamoyladenosine biosynthesis protein.